The chain runs to 184 residues: Chaperone protein dnaJ 72 (184 aa).

Residues 3 to 73 (DHYQVLGVTR…LKRASYNAGS (71 aa)) enclose the J domain. Residues 133–150 (FLLNLALAGGLYFAFTAI) traverse the membrane as a helical segment.

It belongs to the DnaJ family. C/III subfamily.

It is found in the membrane. In terms of biological role, plays a continuous role in plant development probably in the structural organization of compartments. This is Chaperone protein dnaJ 72 (ATJ72) from Arabidopsis thaliana (Mouse-ear cress).